Consider the following 358-residue polypeptide: Ribosomal RNA-processing protein 8 (358 aa).

The segment at 1 to 81 (MKPFEVPPWE…PQDSSDDDYE (81 aa)) is disordered. A compositionally biased stretch (basic residues) spans 30–44 (AKKKPKKKKPKKKKA). Phosphoserine occurs at positions 75 and 76. Residues His185, Gly220, Asp238, and Cys267 each coordinate S-adenosyl-L-methionine.

It belongs to the methyltransferase superfamily. RRP8 family.

Its subcellular location is the nucleus. It is found in the nucleolus. Functionally, probable methyltransferase required to silence rDNA. In Drosophila melanogaster (Fruit fly), this protein is Ribosomal RNA-processing protein 8.